We begin with the raw amino-acid sequence, 768 residues long: Gephyrin (768 aa).

An MPT Mo-transferase region spans residues 14-166 (QIRVGVLTVS…LPGSKKGSQE (153 aa)). Residues 153-348 (LIINLPGSKK…VDITKVARRH (196 aa)) are interaction with GABARAP. Disordered stretches follow at residues 194–245 (DELE…DSSS) and 273–316 (TASL…ASRV). The segment covering 200–212 (PSPPPPLSPPPTT) has biased composition (pro residues). Phosphoserine is present on residues Ser201 and Ser207. Residue Thr211 is modified to Phosphothreonine. Ser213 bears the Phosphoserine mark. Residue Cys225 is the site of S-palmitoyl cysteine attachment. Polar residues predominate over residues 274–299 (ASLSTTPSESPRAQATSRLSTASCPT). The residue at position 275 (Ser275) is a Phosphoserine. 2 positions are modified to phosphothreonine: Thr278 and Thr279. A phosphoserine mark is found at Ser281 and Ser283. Residue Cys297 is the site of S-palmitoyl cysteine attachment. The MPT adenylyltransferase stretch occupies residues 326 to 768 (SSKENILRAS…VVDVMVIGRL (443 aa)). Residue Ser337 is modified to Phosphoserine.

The protein in the N-terminal section; belongs to the MoaB/Mog family. This sequence in the C-terminal section; belongs to the MoeA family. Homotrimer, homodimer and homooligomer. Interacts with SRGAP2 (via SH3 domain). Interacts with GLRB. Interacts with GABARAP. Interacts with GABRA3. GABRA3 and GLRB occupy overlapping binding sites. Interacts with ARHGAP32; IQSEC3, INSYN1 and INSYN2A. The cofactor is Mg(2+). Phosphorylated. Post-translationally, palmitoylated. Palmitoylation is stimulated by GABA type A receptors activity. Palmitoylation by ZDHHC12 regulates clustering at synapses. As to expression, expressed in tissues including spinal cord, brain, liver, kidney and lung.

Its subcellular location is the postsynaptic cell membrane. It is found in the cell membrane. It localises to the cytoplasm. The protein resides in the cytosol. The protein localises to the cytoskeleton. Its subcellular location is the cell projection. It is found in the dendrite. It localises to the postsynaptic density. The enzyme catalyses molybdopterin + ATP + H(+) = adenylyl-molybdopterin + diphosphate. The catalysed reaction is adenylyl-molybdopterin + molybdate = Mo-molybdopterin + AMP + H(+). The protein operates within cofactor biosynthesis; molybdopterin biosynthesis. Its activity is regulated as follows. Inhibited by copper and tungsten. Its function is as follows. Microtubule-associated protein involved in membrane protein-cytoskeleton interactions. It is thought to anchor the inhibitory glycine receptor (GLYR) to subsynaptic microtubules. Acts as a major instructive molecule at inhibitory synapses, where it also clusters GABA type A receptors. Also has a catalytic activity and catalyzes two steps in the biosynthesis of the molybdenum cofactor. In the first step, molybdopterin is adenylated. Subsequently, molybdate is inserted into adenylated molybdopterin and AMP is released. This Rattus norvegicus (Rat) protein is Gephyrin (Gphn).